Consider the following 329-residue polypeptide: Interleukin-12 subunit beta (329 aa).

Positions 1-22 (MHPQQLVIAWLSLVLLAPPLMA) are cleaved as a signal peptide. The Ig-like C2-type domain maps to 23–106 (IWELEKNVYV…LSHSFLLIHK (84 aa)). Cys50 and Cys90 are joined by a disulfide. N-linked (GlcNAc...) asparagine glycans are attached at residues Asn135 and Asn223. The 92-residue stretch at 238 to 329 (PPKNLQLKPL…WSNWASVSCS (92 aa)) folds into the Fibronectin type-III domain.

Belongs to the IL-12B family. In terms of assembly, heterodimer with IL12A; disulfide-linked. The heterodimer is known as interleukin IL-12. Heterodimer with IL23A; disulfide-linked. The heterodimer is known as interleukin IL-23. Also secreted as a monomer. Interacts with NBR1; this interaction promotes IL-12 secretion.

Its subcellular location is the secreted. Its function is as follows. Cytokine that can act as a growth factor for activated T and NK cells, enhance the lytic activity of NK/lymphokine-activated killer cells, and stimulate the production of IFN-gamma by resting PBMC. Functionally, associates with IL23A to form the IL-23 interleukin, a heterodimeric cytokine which functions in innate and adaptive immunity. IL-23 may constitute with IL-17 an acute response to infection in peripheral tissues. IL-23 binds to a heterodimeric receptor complex composed of IL12RB1 and IL23R, activates the Jak-Stat signaling cascade, stimulates memory rather than naive T-cells and promotes production of pro-inflammatory cytokines. IL-23 induces autoimmune inflammation and thus may be responsible for autoimmune inflammatory diseases and may be important for tumorigenesis. The polypeptide is Interleukin-12 subunit beta (IL12B) (Felis catus (Cat)).